Reading from the N-terminus, the 671-residue chain is DNA ligase (671 aa).

Residues 32–36 (DAEYD), 81–82 (SL), and Glu113 contribute to the NAD(+) site. Residue Lys115 is the N6-AMP-lysine intermediate of the active site. NAD(+) contacts are provided by Arg136, Glu173, Lys290, and Lys314. Residues Cys408, Cys411, Cys426, and Cys432 each coordinate Zn(2+). Residues 593–671 (EIDSPFAGKT…EAEMIRLLGA (79 aa)) enclose the BRCT domain.

The protein belongs to the NAD-dependent DNA ligase family. LigA subfamily. Requires Mg(2+) as cofactor. It depends on Mn(2+) as a cofactor.

The catalysed reaction is NAD(+) + (deoxyribonucleotide)n-3'-hydroxyl + 5'-phospho-(deoxyribonucleotide)m = (deoxyribonucleotide)n+m + AMP + beta-nicotinamide D-nucleotide.. Functionally, DNA ligase that catalyzes the formation of phosphodiester linkages between 5'-phosphoryl and 3'-hydroxyl groups in double-stranded DNA using NAD as a coenzyme and as the energy source for the reaction. It is essential for DNA replication and repair of damaged DNA. This Salmonella newport (strain SL254) protein is DNA ligase.